Here is a 90-residue protein sequence, read N- to C-terminus: Signal recognition particle 19 kDa protein (90 aa).

It belongs to the SRP19 family. Part of the signal recognition particle protein translocation system, which is composed of SRP and FtsY. Archaeal SRP consists of a 7S RNA molecule of 300 nucleotides and two protein subunits: SRP54 and SRP19.

It localises to the cytoplasm. Functionally, involved in targeting and insertion of nascent membrane proteins into the cytoplasmic membrane. Binds directly to 7S RNA and mediates binding of the 54 kDa subunit of the SRP. This Methanococcus aeolicus (strain ATCC BAA-1280 / DSM 17508 / OCM 812 / Nankai-3) protein is Signal recognition particle 19 kDa protein.